Consider the following 428-residue polypeptide: Enolase (428 aa).

A (2R)-2-phosphoglycerate-binding site is contributed by Q163. The active-site Proton donor is the E205. Mg(2+) contacts are provided by D242, E286, and D313. (2R)-2-phosphoglycerate contacts are provided by K338, R367, S368, and K389. Residue K338 is the Proton acceptor of the active site.

It belongs to the enolase family. Mg(2+) serves as cofactor.

It localises to the cytoplasm. Its subcellular location is the secreted. The protein localises to the cell surface. The enzyme catalyses (2R)-2-phosphoglycerate = phosphoenolpyruvate + H2O. It functions in the pathway carbohydrate degradation; glycolysis; pyruvate from D-glyceraldehyde 3-phosphate: step 4/5. Catalyzes the reversible conversion of 2-phosphoglycerate (2-PG) into phosphoenolpyruvate (PEP). It is essential for the degradation of carbohydrates via glycolysis. The chain is Enolase from Lactobacillus helveticus (strain DPC 4571).